Here is a 285-residue protein sequence, read N- to C-terminus: ATP synthase gamma chain (285 aa).

It belongs to the ATPase gamma chain family. In terms of assembly, F-type ATPases have 2 components, CF(1) - the catalytic core - and CF(0) - the membrane proton channel. CF(1) has five subunits: alpha(3), beta(3), gamma(1), delta(1), epsilon(1). CF(0) has three main subunits: a, b and c.

It localises to the cell inner membrane. Produces ATP from ADP in the presence of a proton gradient across the membrane. The gamma chain is believed to be important in regulating ATPase activity and the flow of protons through the CF(0) complex. The protein is ATP synthase gamma chain of Protochlamydia amoebophila (strain UWE25).